Here is a 485-residue protein sequence, read N- to C-terminus: Probable protein phosphatase 2C 3 (485 aa).

The span at 1–11 (MSSPSPSSEAA) shows a compositional bias: low complexity. Disordered stretches follow at residues 1 to 29 (MSSP…AAGG) and 43 to 72 (ARAE…AEGG). Positions 13 to 23 (AHHHHHQRRQH) are enriched in basic residues. The 247-residue stretch at 107 to 353 (SSSSSSSLAS…DDTTCIVVDM (247 aa)) folds into the PPM-type phosphatase domain. Residues Asp129, Gly130, Asp305, and Asp344 each contribute to the Mn(2+) site.

The protein belongs to the PP2C family. The cofactor is Mg(2+). Mn(2+) is required as a cofactor.

It carries out the reaction O-phospho-L-seryl-[protein] + H2O = L-seryl-[protein] + phosphate. It catalyses the reaction O-phospho-L-threonyl-[protein] + H2O = L-threonyl-[protein] + phosphate. In Oryza sativa subsp. japonica (Rice), this protein is Probable protein phosphatase 2C 3.